The sequence spans 129 residues: Small ribosomal subunit protein uS9 (129 aa).

The disordered stretch occupies residues 97 to 129; sequence LKAQGFLTRDPRKKERKKYGRKKARKSFQFSKR. A compositionally biased stretch (basic residues) spans 110 to 129; sequence KERKKYGRKKARKSFQFSKR.

The protein belongs to the universal ribosomal protein uS9 family.

The polypeptide is Small ribosomal subunit protein uS9 (Chlamydia trachomatis serovar A (strain ATCC VR-571B / DSM 19440 / HAR-13)).